The following is a 332-amino-acid chain: Procathepsin L (332 aa).

An N-terminal signal peptide occupies residues 1–17 (MHPLLFLAGLCLGVASA). The propeptide at 18-112 (APQLYQSLDA…KVFQAPFFVE (95 aa)) is activation peptide. A Zn(2+)-binding site is contributed by Glu121. The active site involves Cys137. Zn(2+)-binding residues include Glu162, Asp183, Glu198, and Asp208. Cysteines 168 and 210 form a disulfide. Residue Asn220 is glycosylated (N-linked (GlcNAc...) asparagine). Residues Asp226, Asp249, Asp272, and Asp274 each coordinate Zn(2+). Residues Cys268 and Cys321 are joined by a disulfide bond. His275 is a catalytic residue. The propeptide occupies 288–290 (ETE). Asn299 is a catalytic residue.

The protein belongs to the peptidase C1 family. Dimer of a heavy and a light chain linked by disulfide bonds. Interacts with Long isoform of CD74/Ii chain; the interaction stabilizes the conformation of mature CTSL. During export along the endocytic pathway, pro-CTSL undergoes several proteolytic cleavages to generate the CTSL single-chain and two-chain mature forms, composed of a heavy chain linked to a light chain by disulfide bonds. Autocleavage; produces the single-chain CTSL after cleavage of the propeptide. The cleavage can be intermolecular. Expressed in the endometrium.

It is found in the lysosome. It localises to the apical cell membrane. The protein resides in the cytoplasmic vesicle. The protein localises to the secretory vesicle. Its subcellular location is the chromaffin granule. It is found in the secreted. It localises to the extracellular space. The catalysed reaction is Specificity close to that of papain. As compared to cathepsin B, cathepsin L exhibits higher activity toward protein substrates, but has little activity on Z-Arg-Arg-NHMec, and no peptidyl-dipeptidase activity.. Its activity is regulated as follows. Inhibited by the propeptide produced by autocleavage. Long isoform of CD74/Ii chain stabilizes the conformation of mature CTSL by binding to its active site and serving as a chaperone to help maintain a pool of mature enzyme in endocytic compartments and extracellular space of APCs. IFNG enhances the conversion into the CTSL mature and active form. Inhibited by CST6. Inhibited by the glycopeptide antibiotic teicoplanin. Inhibited by amantadine. Functionally, thiol protease important for the overall degradation of proteins in lysosomes. Plays a critical for normal cellular functions such as general protein turnover, antigen processing and bone remodeling. Involved in the solubilization of cross-linked TG/thyroglobulin and in the subsequent release of thyroid hormone thyroxine (T4) by limited proteolysis of TG/thyroglobulin in the thyroid follicle lumen. In neuroendocrine chromaffin cells secretory vesicles, catalyzes the prohormone proenkephalin processing to the active enkephalin peptide neurotransmitter. In thymus, regulates CD4(+) T cell positive selection by generating the major histocompatibility complex class II (MHCII) bound peptide ligands presented by cortical thymic epithelial cells. Also mediates invariant chain processing in cortical thymic epithelial cells. Major elastin-degrading enzyme at neutral pH. Accumulates as a mature and active enzyme in the extracellular space of antigen presenting cells (APCs) to regulate degradation of the extracellular matrix in the course of inflammation. Secreted form generates endostatin from COL18A1. Critical for cardiac morphology and function. Plays an important role in hair follicle morphogenesis and cycling, as well as epidermal differentiation. Required for maximal stimulation of steroidogenesis by TIMP1. The chain is Procathepsin L (CTSL) from Felis catus (Cat).